The sequence spans 247 residues: Acetoacetate decarboxylase (247 aa).

K116 acts as the Schiff-base intermediate with acetoacetate in catalysis.

Belongs to the ADC family.

The enzyme catalyses acetoacetate + H(+) = acetone + CO2. In terms of biological role, catalyzes the conversion of acetoacetate to acetone and carbon dioxide. This Ralstonia nicotianae (strain ATCC BAA-1114 / GMI1000) (Ralstonia solanacearum) protein is Acetoacetate decarboxylase.